The primary structure comprises 260 residues: MAATLSRLDISVDGVSVTYNNARLALYNATCTVEPGTITALVGPNGSGKSTLFKSIMGFLQPSQGRVRIGGFSVQKAQKQQLMAYVPQADEVDWNFPVSVFDVVMMGRYGYMNVLRIPSAKDRRLVMESLERVGMVKYRDRQIGELSGGQKKRAFLARALAQEGKVILLDEPFTGVDVKTEKGMIDLLMELRDEGHTILISTHDLASISTFCDHTILLNRTILAQGKTEETFTKENLELTFGGLPMLSLNQMFESTEVDA.

The 236-residue stretch at 10 to 245 folds into the ABC transporter domain; that stretch reads ISVDGVSVTY…NLELTFGGLP (236 aa). 43–50 is an ATP binding site; it reads GPNGSGKS.

This sequence belongs to the ABC transporter superfamily.

In terms of biological role, part of an ATP-driven transport system for manganese. This chain is Manganese transport system ATP-binding protein MntA (mntA), found in Synechocystis sp. (strain ATCC 27184 / PCC 6803 / Kazusa).